Consider the following 135-residue polypeptide: Small ribosomal subunit protein uS11 (135 aa).

Over residues 1–10 (MPPKSRTATA) the composition is skewed to polar residues. Disordered stretches follow at residues 1–27 (MPPK…HGHA) and 114–135 (GAIQ…RRRV). Over residues 12-27 (RKPRRKEKKNVAHGHA) the composition is skewed to basic residues.

It belongs to the universal ribosomal protein uS11 family. In terms of assembly, part of the 30S ribosomal subunit. Interacts with proteins S7 and S18. Binds to IF-3.

Its function is as follows. Located on the platform of the 30S subunit, it bridges several disparate RNA helices of the 16S rRNA. Forms part of the Shine-Dalgarno cleft in the 70S ribosome. This chain is Small ribosomal subunit protein uS11, found in Kineococcus radiotolerans (strain ATCC BAA-149 / DSM 14245 / SRS30216).